Consider the following 276-residue polypeptide: Formamidopyrimidine-DNA glycosylase (276 aa).

The Schiff-base intermediate with DNA role is filled by Pro-2. The Proton donor role is filled by Glu-3. Lys-58 acts as the Proton donor; for beta-elimination activity in catalysis. The DNA site is built by His-94, Arg-112, and Arg-157. The FPG-type zinc-finger motif lies at 242 to 276 (FVYDRAGEPCRVCGAPIRQIVQGQRSTYYCPNCQR). The Proton donor; for delta-elimination activity role is filled by Arg-266.

It belongs to the FPG family. As to quaternary structure, monomer. Zn(2+) serves as cofactor.

The catalysed reaction is Hydrolysis of DNA containing ring-opened 7-methylguanine residues, releasing 2,6-diamino-4-hydroxy-5-(N-methyl)formamidopyrimidine.. It carries out the reaction 2'-deoxyribonucleotide-(2'-deoxyribose 5'-phosphate)-2'-deoxyribonucleotide-DNA = a 3'-end 2'-deoxyribonucleotide-(2,3-dehydro-2,3-deoxyribose 5'-phosphate)-DNA + a 5'-end 5'-phospho-2'-deoxyribonucleoside-DNA + H(+). In terms of biological role, involved in base excision repair of DNA damaged by oxidation or by mutagenic agents. Acts as a DNA glycosylase that recognizes and removes damaged bases. Has a preference for oxidized purines, such as 7,8-dihydro-8-oxoguanine (8-oxoG). Has AP (apurinic/apyrimidinic) lyase activity and introduces nicks in the DNA strand. Cleaves the DNA backbone by beta-delta elimination to generate a single-strand break at the site of the removed base with both 3'- and 5'-phosphates. This chain is Formamidopyrimidine-DNA glycosylase, found in Burkholderia thailandensis (strain ATCC 700388 / DSM 13276 / CCUG 48851 / CIP 106301 / E264).